We begin with the raw amino-acid sequence, 425 residues long: Serine--tRNA ligase (425 aa).

230–232 lines the L-serine pocket; that stretch reads TAE. Residue 261–263 participates in ATP binding; that stretch reads RSE. Glu284 lines the L-serine pocket. 348–351 contributes to the ATP binding site; sequence EISS. An L-serine-binding site is contributed by Ser384.

Belongs to the class-II aminoacyl-tRNA synthetase family. Type-1 seryl-tRNA synthetase subfamily. Homodimer. The tRNA molecule binds across the dimer.

It localises to the cytoplasm. The catalysed reaction is tRNA(Ser) + L-serine + ATP = L-seryl-tRNA(Ser) + AMP + diphosphate + H(+). It catalyses the reaction tRNA(Sec) + L-serine + ATP = L-seryl-tRNA(Sec) + AMP + diphosphate + H(+). The protein operates within aminoacyl-tRNA biosynthesis; selenocysteinyl-tRNA(Sec) biosynthesis; L-seryl-tRNA(Sec) from L-serine and tRNA(Sec): step 1/1. In terms of biological role, catalyzes the attachment of serine to tRNA(Ser). Is also able to aminoacylate tRNA(Sec) with serine, to form the misacylated tRNA L-seryl-tRNA(Sec), which will be further converted into selenocysteinyl-tRNA(Sec). The chain is Serine--tRNA ligase from Streptococcus pyogenes serotype M3 (strain SSI-1).